We begin with the raw amino-acid sequence, 653 residues long: Macrolide export ATP-binding/permease protein MacB (653 aa).

Residues 6 to 244 (IELQGVSRSY…PPLLPCSAHP (239 aa)) form the ABC transporter domain. 42 to 49 (GSSGSGKS) is a binding site for ATP. 4 helical membrane passes run 275–295 (LLTMAGIVFGIAAVVTVVGLG), 525–545 (FSVLITMVAMIALFIGSLGVM), 576–596 (FLIEAVLVCLTGGLLGVLLAL), and 616–636 (WPAVSGAFLCACAIGMVFGYW).

Belongs to the ABC transporter superfamily. Macrolide exporter (TC 3.A.1.122) family. In terms of assembly, homodimer. Part of the tripartite efflux system MacAB-TolC, which is composed of an inner membrane transporter, MacB, a periplasmic membrane fusion protein, MacA, and an outer membrane component, TolC. The complex forms a large protein conduit and can translocate molecules across both the inner and outer membranes. Interacts with MacA.

It is found in the cell inner membrane. Functionally, part of the tripartite efflux system MacAB-TolC. MacB is a non-canonical ABC transporter that contains transmembrane domains (TMD), which form a pore in the inner membrane, and an ATP-binding domain (NBD), which is responsible for energy generation. Confers resistance against macrolides. In Sodalis glossinidius (strain morsitans), this protein is Macrolide export ATP-binding/permease protein MacB.